A 443-amino-acid polypeptide reads, in one-letter code: Amino-acid acetyltransferase (443 aa).

The N-acetyltransferase domain maps to 296–443 (EQIRRATIND…RSKVLMADLG (148 aa)).

It belongs to the acetyltransferase family. ArgA subfamily. Homohexamer.

The protein resides in the cytoplasm. It catalyses the reaction L-glutamate + acetyl-CoA = N-acetyl-L-glutamate + CoA + H(+). Its pathway is amino-acid biosynthesis; L-arginine biosynthesis; N(2)-acetyl-L-ornithine from L-glutamate: step 1/4. The protein is Amino-acid acetyltransferase (argA) of Salmonella typhi.